A 734-amino-acid polypeptide reads, in one-letter code: Cytosolic endo-beta-N-acetylglucosaminidase (734 aa).

Position 1 is an N-acetylmethionine (methionine 1). The segment at 1–45 is disordered; sequence METSSVLTRGAARQRSPAAPEKQARDQTERRPGRRRQGRRINEDQ. Over residues 22–31 the composition is skewed to basic and acidic residues; the sequence is KQARDQTERR. A BRCT domain is found at 281-375; it reads QNRVFFDSCD…DFFQNQDKFW (95 aa).

Belongs to the glycosyl hydrolase 85 family.

Its subcellular location is the cytoplasm. It localises to the cytosol. The enzyme catalyses an N(4)-(oligosaccharide-(1-&gt;3)-[oligosaccharide-(1-&gt;6)]-beta-D-Man-(1-&gt;4)-beta-D-GlcNAc-(1-&gt;4)-alpha-D-GlcNAc)-L-asparaginyl-[protein] + H2O = an oligosaccharide-(1-&gt;3)-[oligosaccharide-(1-&gt;6)]-beta-D-Man-(1-&gt;4)-D-GlcNAc + N(4)-(N-acetyl-beta-D-glucosaminyl)-L-asparaginyl-[protein]. Endoglycosidase that releases N-glycans from glycoproteins by cleaving the beta-1,4-glycosidic bond in the N,N'-diacetylchitobiose core. Involved in the processing of free oligosaccharides in the cytosol. In Mus musculus (Mouse), this protein is Cytosolic endo-beta-N-acetylglucosaminidase (Engase).